The following is a 140-amino-acid chain: Large ribosomal subunit protein uL11 (140 aa).

Belongs to the universal ribosomal protein uL11 family. In terms of assembly, part of the ribosomal stalk of the 50S ribosomal subunit. Interacts with L10 and the large rRNA to form the base of the stalk. L10 forms an elongated spine to which L12 dimers bind in a sequential fashion forming a multimeric L10(L12)X complex. One or more lysine residues are methylated.

Forms part of the ribosomal stalk which helps the ribosome interact with GTP-bound translation factors. The protein is Large ribosomal subunit protein uL11 of Staphylococcus aureus (strain Mu3 / ATCC 700698).